Consider the following 419-residue polypeptide: D-amino acid dehydrogenase (419 aa).

Position 3–17 (3–17 (VLILGSGVVGVTSAY)) interacts with FAD.

This sequence belongs to the DadA oxidoreductase family. The cofactor is FAD.

It catalyses the reaction a D-alpha-amino acid + A + H2O = a 2-oxocarboxylate + AH2 + NH4(+). The protein operates within amino-acid degradation; D-alanine degradation; NH(3) and pyruvate from D-alanine: step 1/1. In terms of biological role, oxidative deamination of D-amino acids. In Chromohalobacter salexigens (strain ATCC BAA-138 / DSM 3043 / CIP 106854 / NCIMB 13768 / 1H11), this protein is D-amino acid dehydrogenase.